Here is a 462-residue protein sequence, read N- to C-terminus: Juvenile hormone epoxide hydrolase (462 aa).

The chain crosses the membrane as a helical span at residues 4 to 24 (ILSSFVAGVAIGSGLVITYVL). Asp227 serves as the catalytic Nucleophile. Tyr372 acts as the Proton donor in catalysis. His428 serves as the catalytic Proton acceptor.

It belongs to the peptidase S33 family.

The protein resides in the microsome membrane. The protein localises to the endoplasmic reticulum membrane. It carries out the reaction cis-stilbene oxide + H2O = (1R,2R)-hydrobenzoin. It catalyses the reaction 1-(4-methoxyphenyl)-N-methyl-N-[(3-methyloxetan-3-yl)methyl]methanamine + H2O = 2-{[(4-methoxybenzyl)(methyl)amino]methyl}-2-methylpropane-1,3-diol. In terms of biological role, catalyzes juvenile hormone hydrolysis. The protein is Juvenile hormone epoxide hydrolase of Manduca sexta (Tobacco hawkmoth).